A 274-amino-acid chain; its full sequence is Large ribosomal subunit protein uL2cz/uL2cy (274 aa).

2 disordered regions span residues 1-23 (MAIH…SKVK) and 224-274 (NPVD…RRSK).

The protein belongs to the universal ribosomal protein uL2 family. In terms of assembly, part of the 50S ribosomal subunit.

The protein localises to the plastid. It is found in the chloroplast. The sequence is that of Large ribosomal subunit protein uL2cz/uL2cy (rpl2-A) from Lactuca sativa (Garden lettuce).